Consider the following 68-residue polypeptide: Conotoxin Vx2 (68 aa).

The N-terminal stretch at 1 to 20 (MMSKLGVLVTICLLLFPLTA) is a signal peptide. Positions 21–47 (LPLDGDQPADHPAKRTQDHNLASPISA) are excised as a propeptide. 3 cysteine pairs are disulfide-bonded: C55–C68, C56–C61, and C57–C65.

This sequence belongs to the conotoxin M superfamily. Expressed by the venom duct.

The protein resides in the secreted. In vivo, elicits a series of symptoms, such as being sedative, tail stiffening and twisted jumping, when injected intracranially into mice. In Conus vexillum (Flag cone), this protein is Conotoxin Vx2.